Reading from the N-terminus, the 686-residue chain is Putative xyloglucan glycosyltransferase 10 (686 aa).

The next 2 membrane-spanning stretches (helical) occupy residues 114–134 and 160–180; these read LYAFIRASLLLSVFLLAVELA and AAYVAPPLQLLADACVVLFLV. D267 is an active-site residue. Residues D326 and D328 each contribute to the substrate site. The active site involves D420. 4 consecutive transmembrane segments (helical) span residues 498–518, 523–543, 640–656, and 661–681; these read LILPFYSFTLFCIILPMTMFI, LPDWVVCYIPALMSFLNILPA, ELALSLLLLTAAARSLL, and IHFYFLMFQGLSFLLVGLDLI.

It belongs to the glycosyltransferase 2 family. Plant cellulose synthase-like C subfamily.

It is found in the golgi apparatus membrane. Its function is as follows. Probable beta-1,4-glucan synthase rather involved in the synthesis of the xyloglucan backbone than cellulose. Seems to work simultaneously with xyloglucan 6-xylosyltransferase. Xyloglucan is a noncellulosic polysaccharides of plant cell wall and consists of a glucan backbone substituted by xylose, galactose and fucose. This chain is Putative xyloglucan glycosyltransferase 10 (CSLC10), found in Oryza sativa subsp. indica (Rice).